A 569-amino-acid polypeptide reads, in one-letter code: MEVDIRRVALKHALANAVKFGGKARVDSVVSKVFAEVPEARKAAKEVVELVKEVVEEVNSMSPESQASLLSELWPEALSGERKVEVKRLPPLPGAEEVGGKVVTRFAPNPDFVLHLGSARPAILNYYYAKKMYNGKFILRFEDTDPRTKRPMPEAYDLIREDLRWLGTPWDEEYIQSQRMEVYYEVAEALIKSGNAYVCTHSQDEIKAFRDAGKPDPCSFLPPEEHMERWEKMLSGEYPEGAAVLRIKTDPAHPNPSVRDWIAFRVLDTEKTPHPLTGDKYRVWPTYNFACAVDDHMLGVTHVLRGEEHAVNTLKQEYVYRHMGWKPPVSIHFGRMNLEGMVLSKSVIRRGIEKGLFSSIDDIRLGTLRALRRRGILPEAIWDLVLEVGIKPSTARVSVDKLHAFNRKYLEPRANRYMFVPEPAKVASIEGLEAPITAEVIVHPSFPERGRRRITFSKPEVYLPSDVASSMVRLMGLGNFEVVDGGSKLRYLNNDVSFAKKHELPIVQWAPVESSVRGRVLKAAGTKIEEISGYGEPSLAELPPGEQVQFVRLGFVRVEGPETYIFTHD.

A 'HIGH' region motif is present at residues 108–118 (PNPDFVLHLGS).

This sequence belongs to the class-I aminoacyl-tRNA synthetase family. Glutamate--tRNA ligase type 2 subfamily.

The protein localises to the cytoplasm. The enzyme catalyses tRNA(Glu) + L-glutamate + ATP = L-glutamyl-tRNA(Glu) + AMP + diphosphate. Functionally, catalyzes the attachment of glutamate to tRNA(Glu) in a two-step reaction: glutamate is first activated by ATP to form Glu-AMP and then transferred to the acceptor end of tRNA(Glu). The sequence is that of Glutamate--tRNA ligase from Thermofilum pendens (strain DSM 2475 / Hrk 5).